The chain runs to 97 residues: uncharacterized protein (97 aa).

3 helical membrane-spanning segments follow: residues Ile-5 to Ile-25, Ile-49 to Gly-71, and Leu-75 to Asn-92.

The protein resides in the cell membrane. This is an uncharacterized protein from Bacillus subtilis (strain 168).